Here is a 586-residue protein sequence, read N- to C-terminus: Phosphatase and actin regulator 1 (586 aa).

Residues 62-83 carry the Nuclear localization signal motif; that stretch reads RRRSKFATLGRLFKPWKWRKKK. Residues 92–117 form an RPEL 1 repeat; that stretch reads AALERKISMRQSREELIKRGVLKEMY. The disordered stretch occupies residues 373–414; the sequence is ECEDDKENVPHETSYDDSSCLYSRDEEEDDDDDDDDEDDDSS. Acidic residues predominate over residues 397–413; the sequence is DEEEDDDDDDDDEDDDS. RPEL repeat units follow at residues 428-453, 466-491, and 504-529; these read DSLA…PMQT, TKLT…KPRN, and RRLT…ISFS.

It belongs to the phosphatase and actin regulator family. As to quaternary structure, interacts (via RPEL repeats) with ACTA1.

The protein localises to the cytoplasm. It is found in the synapse. Its subcellular location is the nucleus. Binds actin monomers (G actin) and plays a role in the reorganization of the actin cytoskeleton and in formation of actin stress fibers. This is Phosphatase and actin regulator 1 (phactr1) from Xenopus laevis (African clawed frog).